Reading from the N-terminus, the 438-residue chain is Forkhead box protein J1 (438 aa).

The segment at residues Lys-123–Leu-217 is a DNA-binding region (fork-head).

This sequence belongs to the FOXJ1 family.

Its subcellular location is the nucleus. In terms of biological role, key transcription factor required for motile ciliogenesis. Activates genes essential for motile cilia formation and function. This Xenopus tropicalis (Western clawed frog) protein is Forkhead box protein J1.